Here is a 398-residue protein sequence, read N- to C-terminus: tRNA-specific 2-thiouridylase MnmA (398 aa).

ATP-binding positions include 20–27 and leucine 46; that span reads AMSGGVDS. Cysteine 114 acts as the Nucleophile in catalysis. Cysteine 114 and cysteine 210 form a disulfide bridge. Glycine 138 lines the ATP pocket. The interval 160-162 is interaction with tRNA; it reads RDQ. The active-site Cysteine persulfide intermediate is the cysteine 210.

This sequence belongs to the MnmA/TRMU family.

It is found in the cytoplasm. The enzyme catalyses S-sulfanyl-L-cysteinyl-[protein] + uridine(34) in tRNA + AH2 + ATP = 2-thiouridine(34) in tRNA + L-cysteinyl-[protein] + A + AMP + diphosphate + H(+). Functionally, catalyzes the 2-thiolation of uridine at the wobble position (U34) of tRNA, leading to the formation of s(2)U34. This is tRNA-specific 2-thiouridylase MnmA from Brucella abortus (strain S19).